The chain runs to 257 residues: UPF0246 protein RSKD131_2757 (257 aa).

The protein belongs to the UPF0246 family.

The chain is UPF0246 protein RSKD131_2757 from Cereibacter sphaeroides (strain KD131 / KCTC 12085) (Rhodobacter sphaeroides).